The primary structure comprises 634 residues: MTELDYSKLGLKVGLEIHQQLNTNKKLFCDCSTTLDEKHHGTLQRYLRPSFSEIGEIDTAALFEWQKGKKYLYQIPFNSCLVEADEEPPHGLNREALAVVLAVAMSLESNIVDEIYVMRKIVIDGSDTTGFQRTSIVAMGGQVIVEGKKIGIQTIALEEDAARKISESANETMYSLDRLGIPLIEISTAPDITTPEEAEKVAFRIGQLLRLTGKVKRGIGTIRQDLNVSIQGGVKTEIKGVQRLELIPEIIKNEARRQYELLKIKDELVNKRGLSKTIVENEIKELELTHLFRNTNSKIIKKELEKGGLIYGIKFKGFKGIFGRELMPNRRFGTEIADYVRALAELGGIFHSDELPNYGITSEEVESVKKELGIGENDGFVLVIGDKEKLKVAITKIKERVLYAFVGVPKETRVALDDGTTKFMRPQPGSARMYPETDIIPIKIDESILNFAKSFVPENPETKLRKLIEMGLSKELATEILNSPRLDLFEELSKKYSPKVSPIVIATTLENYIKYAKSKGGDISVITDEVIEEIINALYNDKISKDSIQEILVDYSTSKKPIRNIVDNYAKITDEELNRIIDKILDENKDIINQKGEKAFNVIIGKVMNVVKGRAEGKKVVDTLKLKMKNYPRT.

This sequence belongs to the GatB/GatE family. GatE subfamily. Heterodimer of GatD and GatE.

The enzyme catalyses L-glutamyl-tRNA(Gln) + L-glutamine + ATP + H2O = L-glutaminyl-tRNA(Gln) + L-glutamate + ADP + phosphate + H(+). In terms of biological role, allows the formation of correctly charged Gln-tRNA(Gln) through the transamidation of misacylated Glu-tRNA(Gln) in organisms which lack glutaminyl-tRNA synthetase. The reaction takes place in the presence of glutamine and ATP through an activated gamma-phospho-Glu-tRNA(Gln). The GatDE system is specific for glutamate and does not act on aspartate. The chain is Glutamyl-tRNA(Gln) amidotransferase subunit E from Sulfolobus acidocaldarius (strain ATCC 33909 / DSM 639 / JCM 8929 / NBRC 15157 / NCIMB 11770).